Reading from the N-terminus, the 1192-residue chain is Homeodomain-interacting protein kinase 3 (1192 aa).

Lys27 is covalently cross-linked (Glycyl lysine isopeptide (Lys-Gly) (interchain with G-Cter in SUMO); alternate). A Glycyl lysine isopeptide (Lys-Gly) (interchain with G-Cter in SUMO2); alternate cross-link involves residue Lys27. The Protein kinase domain maps to 197–525 (YEVLDFLGRG…PIETLNHPFV (329 aa)). Residues 203 to 211 (LGRGTFGQV) and Lys226 each bind ATP. Residue Asp322 is the Proton acceptor of the active site. Tyr359 carries the post-translational modification Phosphotyrosine. The tract at residues 767–921 (QNRSNSLQNT…NSMSDDEQES (155 aa)) is interaction with AR. The interaction with FAS stretch occupies residues 775–868 (NTNIPHSAFI…SPRPSLRECK (94 aa)). Residues 799–829 (CVDTQDNHTSEGEAGTCREASVRQDSSVSDK) form a disordered region. The interval 832–988 (QTIIIADSPS…ESGLSVDEHM (157 aa)) is required for localization to nuclear speckles. The interval 843-895 (AVSVITISSDSDDEETSPRPSLRECKGSLDCEACQSTLNIDRMCSLSSPDSTL) is SUMO interaction motifs (SIM); required for nuclear localization and kinase activity. An interaction with UBL1 region spans residues 847 to 857 (ITISSDSDDEE). Low complexity predominate over residues 889–906 (SSPDSTLSTSSSGQSSPS). 2 disordered regions span residues 889–943 (SSPD…PFAE) and 956–1023 (LGTC…KPAA). Residue Lys1185 forms a Glycyl lysine isopeptide (Lys-Gly) (interchain with G-Cter in SUMO) linkage.

This sequence belongs to the protein kinase superfamily. CMGC Ser/Thr protein kinase family. HIPK subfamily. In terms of assembly, interacts with UBL1/SUMO-1. Interacts with and stabilizes ligand-bound androgen receptor (AR). Interacts with Nkx1-2. Interacts with FAS and DAXX. Probably part of a complex consisting of HIPK3, FAS and FADD. Binds to NR5A1/SF1, SPEN/MINT and RUNX2. Post-translationally, autophosphorylated, but autophosphorylation is not required for catalytic activity. May be sumoylated. As to expression, heart, skeletal muscle, spleen, testis and lung.

It is found in the cytoplasm. The protein localises to the nucleus. The catalysed reaction is L-seryl-[protein] + ATP = O-phospho-L-seryl-[protein] + ADP + H(+). The enzyme catalyses L-threonyl-[protein] + ATP = O-phospho-L-threonyl-[protein] + ADP + H(+). In terms of biological role, serine/threonine-protein kinase involved in transcription regulation, apoptosis and steroidogenic gene expression. Phosphorylates JUN and RUNX2. Seems to negatively regulate apoptosis by promoting FADD phosphorylation. Enhances androgen receptor-mediated transcription. May act as a transcriptional corepressor for NK homeodomain transcription factors. The phosphorylation of NR5A1 activates SF1 leading to increased steroidogenic gene expression upon cAMP signaling pathway stimulation. In osteoblasts, supports transcription activation: phosphorylates RUNX2 that synergizes with SPEN/MINT to enhance FGFR2-mediated activation of the osteocalcin FGF-responsive element (OCFRE). This chain is Homeodomain-interacting protein kinase 3 (Hipk3), found in Mus musculus (Mouse).